Reading from the N-terminus, the 596-residue chain is MHRYRSHTCAQLRKSDVGSSVRLSGWVHRVRDHGGLLFIDLRDHYGLTQIVADPDSPAFKVAETVRGEWVIRVDGEVKARLSETVNANLPTGEIEIFAREIEVLSAAKELPLPVFGEPDYPEDIRLKYRFLDLRRDTLHKNIVARTKIIAEMRKRMGDVGFTEFSTPILTASSPEGARDFLVPSRIHPGTFYALPQAPQQYKQLIMVSGFDRYFQIAPCFRDEDPRADRLPGEFYQLDLEMSFVEQDDVLNTMEPVLRGVFETFANGKPVTQKFQRIPYDVAMRKYGSDKPDLRNPIEMQAVSDHFRDSGFKVFANILANDPKAEVWGIPAKTGGSRAFCDRMNSWAQGEGQPGLGYIFWRKEGDKLEGAGPLAKNIGEERTEAIRQQLGLADGDAAFFVAGDPKKFVSFAGAARTRAGEELNLVDRERFELCWIVDFPFFEWNEEEKKIDFAHNPFSMPQGGIDALNGEDLLGIKAFQYDMVCNGFEIASGGIRNHLPETMVKAFETVGLDRATVEERFGGLYRAFQYGAPPHGGMAAGIDRVVMLLVGAKNLREVTMFPMNQQAYDLLMNAPSEASPQQLRELALRVAPTKKDA.

Glu175 provides a ligand contact to L-aspartate. The segment at 199 to 202 (QQYK) is aspartate. Arg221 and His454 together coordinate L-aspartate. Position 221–223 (221–223 (RDE)) interacts with ATP. Glu488 contributes to the ATP binding site. Arg495 is an L-aspartate binding site. An ATP-binding site is contributed by 540-543 (GIDR).

Belongs to the class-II aminoacyl-tRNA synthetase family. Type 1 subfamily. As to quaternary structure, homodimer.

It localises to the cytoplasm. It carries out the reaction tRNA(Asx) + L-aspartate + ATP = L-aspartyl-tRNA(Asx) + AMP + diphosphate. Its function is as follows. Aspartyl-tRNA synthetase with relaxed tRNA specificity since it is able to aspartylate not only its cognate tRNA(Asp) but also tRNA(Asn). Reaction proceeds in two steps: L-aspartate is first activated by ATP to form Asp-AMP and then transferred to the acceptor end of tRNA(Asp/Asn). This is Aspartate--tRNA(Asp/Asn) ligase from Mesorhizobium japonicum (strain LMG 29417 / CECT 9101 / MAFF 303099) (Mesorhizobium loti (strain MAFF 303099)).